A 690-amino-acid chain; its full sequence is DNA ligase (690 aa).

NAD(+)-binding positions include 43–47 (DAEYD), 92–93 (SI), and glutamate 129. The N6-AMP-lysine intermediate role is filled by lysine 131. Positions 152, 188, 309, and 333 each coordinate NAD(+). Zn(2+) contacts are provided by cysteine 427, cysteine 430, cysteine 445, and cysteine 451. The region spanning 610–690 (VTPTPLSGKT…GLKELLDGHS (81 aa)) is the BRCT domain.

This sequence belongs to the NAD-dependent DNA ligase family. LigA subfamily. Requires Mg(2+) as cofactor. It depends on Mn(2+) as a cofactor.

The catalysed reaction is NAD(+) + (deoxyribonucleotide)n-3'-hydroxyl + 5'-phospho-(deoxyribonucleotide)m = (deoxyribonucleotide)n+m + AMP + beta-nicotinamide D-nucleotide.. Its function is as follows. DNA ligase that catalyzes the formation of phosphodiester linkages between 5'-phosphoryl and 3'-hydroxyl groups in double-stranded DNA using NAD as a coenzyme and as the energy source for the reaction. It is essential for DNA replication and repair of damaged DNA. The polypeptide is DNA ligase (Albidiferax ferrireducens (strain ATCC BAA-621 / DSM 15236 / T118) (Rhodoferax ferrireducens)).